The sequence spans 358 residues: Testis-specific serine/threonine-protein kinase 2 (358 aa).

The Protein kinase domain occupies 12–272 (YIVGINLGKG…IDEILSHSWL (261 aa)). ATP-binding positions include 18–26 (LGKGSYAKV) and Lys-41. Catalysis depends on Asp-136, which acts as the Proton acceptor. Basic and acidic residues-rich tracts occupy residues 296-315 (DCKL…DHKL) and 329-358 (NEDR…KAST). The segment at 296-358 (DCKLDTRPGS…SGAEVEKAST (63 aa)) is disordered.

The protein belongs to the protein kinase superfamily. CAMK Ser/Thr protein kinase family. Interacts with TSSK1B. Interacts with HSP90; this interaction stabilizes TSSK2. Requires Mg(2+) as cofactor. Post-translationally, autophosphorylated. Ubiquitinated; HSP90 activity negatively regulates ubiquitination and degradation. As to expression, testis-specific. Expressed only in the spermatids postmeiotically at the final stages of cytodifferentiation in the seminiferous tubules (at protein level). Not detected in released sperms in the lumen of the seminiferous tubules. Also present in the epididymal sperm (at protein level).

It is found in the cytoplasm. It localises to the cytoskeleton. The protein localises to the microtubule organizing center. The protein resides in the centrosome. Its subcellular location is the centriole. It is found in the cytoplasmic vesicle. It localises to the secretory vesicle. The protein localises to the acrosome. The enzyme catalyses L-seryl-[protein] + ATP = O-phospho-L-seryl-[protein] + ADP + H(+). It carries out the reaction L-threonyl-[protein] + ATP = O-phospho-L-threonyl-[protein] + ADP + H(+). Its activity is regulated as follows. Activated by phosphorylation on Thr-174, potentially by autophosphorylation. Testis-specific serine/threonine-protein kinase required during spermatid development. Phosphorylates 'Ser-281' of TSKS and SPAG16. Involved in the late stages of spermatogenesis, during the reconstruction of the cytoplasm. During spermatogenesis, required for the transformation of a ring-shaped structure around the base of the flagellum originating from the chromatoid body. This is Testis-specific serine/threonine-protein kinase 2 (Tssk2) from Mus musculus (Mouse).